We begin with the raw amino-acid sequence, 182 residues long: Peptidyl-prolyl cis-trans isomerase H (182 aa).

The PPIase cyclophilin-type domain occupies 15-181 (FFDITIGGEP…LDVVISQCGE (167 aa)).

Belongs to the cyclophilin-type PPIase family. PPIase H subfamily.

The protein resides in the nucleus. The enzyme catalyses [protein]-peptidylproline (omega=180) = [protein]-peptidylproline (omega=0). PPIases accelerate the folding of proteins. It catalyzes the cis-trans isomerization of proline imidic peptide bonds in oligopeptides. This chain is Peptidyl-prolyl cis-trans isomerase H (CYP3), found in Gibberella zeae (strain ATCC MYA-4620 / CBS 123657 / FGSC 9075 / NRRL 31084 / PH-1) (Wheat head blight fungus).